A 313-amino-acid polypeptide reads, in one-letter code: Aspartate carbamoyltransferase catalytic subunit (313 aa).

Carbamoyl phosphate contacts are provided by R61 and T62. K89 contacts L-aspartate. Carbamoyl phosphate-binding residues include R111, H139, and Q142. Positions 172 and 227 each coordinate L-aspartate. 2 residues coordinate carbamoyl phosphate: G268 and P269.

This sequence belongs to the aspartate/ornithine carbamoyltransferase superfamily. ATCase family. As to quaternary structure, heterododecamer (2C3:3R2) of six catalytic PyrB chains organized as two trimers (C3), and six regulatory PyrI chains organized as three dimers (R2).

The catalysed reaction is carbamoyl phosphate + L-aspartate = N-carbamoyl-L-aspartate + phosphate + H(+). It functions in the pathway pyrimidine metabolism; UMP biosynthesis via de novo pathway; (S)-dihydroorotate from bicarbonate: step 2/3. Its function is as follows. Catalyzes the condensation of carbamoyl phosphate and aspartate to form carbamoyl aspartate and inorganic phosphate, the committed step in the de novo pyrimidine nucleotide biosynthesis pathway. The protein is Aspartate carbamoyltransferase catalytic subunit of Gluconobacter oxydans (strain 621H) (Gluconobacter suboxydans).